The following is a 124-amino-acid chain: Small ribosomal subunit protein uS13 (124 aa).

The segment at 95 to 124 is disordered; it reads GLPVRGQRTKTNARTRKGPKRTIAGKKKAR.

It belongs to the universal ribosomal protein uS13 family. As to quaternary structure, part of the 30S ribosomal subunit. Forms a loose heterodimer with protein S19. Forms two bridges to the 50S subunit in the 70S ribosome.

Its function is as follows. Located at the top of the head of the 30S subunit, it contacts several helices of the 16S rRNA. In the 70S ribosome it contacts the 23S rRNA (bridge B1a) and protein L5 of the 50S subunit (bridge B1b), connecting the 2 subunits; these bridges are implicated in subunit movement. Contacts the tRNAs in the A and P-sites. In Mycobacterium avium (strain 104), this protein is Small ribosomal subunit protein uS13.